An 89-amino-acid chain; its full sequence is Small ribosomal subunit protein uS15 (89 aa).

Belongs to the universal ribosomal protein uS15 family. As to quaternary structure, part of the 30S ribosomal subunit. Forms a bridge to the 50S subunit in the 70S ribosome, contacting the 23S rRNA.

One of the primary rRNA binding proteins, it binds directly to 16S rRNA where it helps nucleate assembly of the platform of the 30S subunit by binding and bridging several RNA helices of the 16S rRNA. Functionally, forms an intersubunit bridge (bridge B4) with the 23S rRNA of the 50S subunit in the ribosome. The protein is Small ribosomal subunit protein uS15 of Chlorobaculum parvum (strain DSM 263 / NCIMB 8327) (Chlorobium vibrioforme subsp. thiosulfatophilum).